The primary structure comprises 427 residues: MTQMLEARKGHITEEMEKVALIEGVTPEFVREGVAKGHIVIPKNKFRSRDKICGIGGGLDVKVNGLMGTSSDRNDMEMEAKKLRILEECGANAFMDLSTGDDIDAMRKQSLTISNIAAGCVPVYQASVEAIEKHGSMVGMTEDELFDTVEKQCQEGMDFMAIHSALNWSVLNALKKSGRVTDVVSRGGSFLTAWMFHNKKENPLYEHFDRLLEILKATDTVLSIGDAIRPGANADSLDSAQVQGLIVAGELTKRALEAGVQVMIEGPGHVPLNQIATTMQLQKQLCYGVPYYILGFLATDVAPGYDNITGAIGGAFAGMHGADFLCYLTPAEHLGLPNEDDVRMGVRTTKIAADAANVLKRGGNAWNRSLAMSKARVARDEKVQVANALDPEYLESKLKAEPESHGCAACGKSKCPADVAAEFFGIA.

Belongs to the ThiC family. 5-hydroxybenzimidazole synthase subfamily. [4Fe-4S] cluster is required as a cofactor.

The enzyme catalyses 5-amino-1-(5-phospho-beta-D-ribosyl)imidazole + AH2 + S-adenosyl-L-methionine = 5-hydroxybenzimidazole + 5'-deoxyadenosine + formate + L-methionine + A + NH4(+) + phosphate + 2 H(+). It participates in cofactor biosynthesis; adenosylcobalamin biosynthesis. In terms of biological role, together with BzaA, catalyzes the conversion of aminoimidazole ribotide (AIR) to 5-hydroxybenzimidazole (5-HBI) in a radical S-adenosyl-L-methionine (SAM)-dependent reaction. Is thus involved in the anaerobic biosynthesis of dimethylbenzimidazole (DMB), the lower axial ligand of vitamin B12 (cobalamin). Requires BzaA for catalytic activity, as BzaB alone displays no activity. The polypeptide is 5-hydroxybenzimidazole synthase BzaB (Eubacterium limosum).